The sequence spans 53 residues: uncharacterized protein (53 aa).

The protein localises to the mitochondrion matrix. It localises to the kinetoplast. This is an uncharacterized protein from Trypanosoma brucei brucei.